The chain runs to 254 residues: Chaperone protein PmfD (254 aa).

The first 26 residues, 1-26, serve as a signal peptide directing secretion; sequence MNSFSTLKTLFCGSLLALSLVNTTQA.

The protein belongs to the periplasmic pilus chaperone family.

Its subcellular location is the periplasm. Involved in the biogenesis of the PMF fimbria. The polypeptide is Chaperone protein PmfD (pmfD) (Proteus mirabilis (strain HI4320)).